The sequence spans 252 residues: 5'-nucleotidase SurE (252 aa).

4 residues coordinate a divalent metal cation: Asp-8, Asp-9, Ser-39, and Asn-91.

It belongs to the SurE nucleotidase family. A divalent metal cation serves as cofactor.

Its subcellular location is the cytoplasm. It catalyses the reaction a ribonucleoside 5'-phosphate + H2O = a ribonucleoside + phosphate. Functionally, nucleotidase that shows phosphatase activity on nucleoside 5'-monophosphates. This is 5'-nucleotidase SurE from Paraburkholderia xenovorans (strain LB400).